Consider the following 140-residue polypeptide: Nucleoside diphosphate kinase (140 aa).

Residues K11, F59, R87, T93, R104, and N114 each contribute to the ATP site. Catalysis depends on H117, which acts as the Pros-phosphohistidine intermediate.

This sequence belongs to the NDK family. In terms of assembly, homotetramer. It depends on Mg(2+) as a cofactor.

It is found in the cytoplasm. It carries out the reaction a 2'-deoxyribonucleoside 5'-diphosphate + ATP = a 2'-deoxyribonucleoside 5'-triphosphate + ADP. The enzyme catalyses a ribonucleoside 5'-diphosphate + ATP = a ribonucleoside 5'-triphosphate + ADP. Its function is as follows. Major role in the synthesis of nucleoside triphosphates other than ATP. The ATP gamma phosphate is transferred to the NDP beta phosphate via a ping-pong mechanism, using a phosphorylated active-site intermediate. This Rhodopseudomonas palustris (strain ATCC BAA-98 / CGA009) protein is Nucleoside diphosphate kinase.